The following is a 1246-amino-acid chain: Respiratory nitrate reductase 2 alpha chain (1246 aa).

One can recognise a 4Fe-4S Mo/W bis-MGD-type domain in the interval 43-107 (DKIVRSTHGV…SYSWYLYSAN (65 aa)). [4Fe-4S] cluster contacts are provided by His50, Cys54, Cys58, and Cys93. Position 223 (Asp223) interacts with Mo-bis(molybdopterin guanine dinucleotide).

This sequence belongs to the prokaryotic molybdopterin-containing oxidoreductase family. As to quaternary structure, tetramer composed of an alpha, a beta and 2 gamma chains. Alpha and beta are catalytic chains; gamma chain is involved in binding the enzyme complex to the cytoplasmic membrane. [4Fe-4S] cluster is required as a cofactor. The cofactor is Mo-bis(molybdopterin guanine dinucleotide).

The protein resides in the cell membrane. It catalyses the reaction nitrate + a quinol = a quinone + nitrite + H2O. Functionally, this is a second nitrate reductase enzyme which can substitute for the NRA enzyme and allows E.coli to use nitrate as an electron acceptor during anaerobic growth. In terms of biological role, the alpha chain is the actual site of nitrate reduction. This is Respiratory nitrate reductase 2 alpha chain (narZ) from Escherichia coli (strain K12).